The following is a 916-amino-acid chain: Protein translocase subunit SecA (916 aa).

Residues Q87, 105–109, and D507 contribute to the ATP site; that span reads GEGKT. Zn(2+) is bound by residues C900, C902, C911, and H912.

This sequence belongs to the SecA family. As to quaternary structure, monomer and homodimer. Part of the essential Sec protein translocation apparatus which comprises SecA, SecYEG and auxiliary proteins SecDF-YajC and YidC. Requires Zn(2+) as cofactor.

Its subcellular location is the cell inner membrane. The protein resides in the cytoplasm. The catalysed reaction is ATP + H2O + cellular proteinSide 1 = ADP + phosphate + cellular proteinSide 2.. Part of the Sec protein translocase complex. Interacts with the SecYEG preprotein conducting channel. Has a central role in coupling the hydrolysis of ATP to the transfer of proteins into and across the cell membrane, serving both as a receptor for the preprotein-SecB complex and as an ATP-driven molecular motor driving the stepwise translocation of polypeptide chains across the membrane. The polypeptide is Protein translocase subunit SecA (Neisseria meningitidis serogroup B (strain ATCC BAA-335 / MC58)).